The chain runs to 90 residues: Cell division topological specificity factor (90 aa).

Belongs to the MinE family.

In terms of biological role, prevents the cell division inhibition by proteins MinC and MinD at internal division sites while permitting inhibition at polar sites. This ensures cell division at the proper site by restricting the formation of a division septum at the midpoint of the long axis of the cell. The polypeptide is Cell division topological specificity factor (Clostridium perfringens (strain SM101 / Type A)).